The following is a 319-amino-acid chain: Meiotic drive suppressor wtf16 (319 aa).

Disordered stretches follow at residues 1–22 (MKNN…KTGH) and 35–68 (DSEE…RSTD). 6 helical membrane-spanning segments follow: residues 73-93 (FLIK…LAIC), 110-130 (WTLF…LTYF), 153-173 (VVII…CIKF), 187-207 (CSIS…FWTL), 215-235 (FQVL…MYLF), and 241-261 (ATGY…FFFY).

It belongs to the WTF family. In terms of assembly, homomer. Interacts with other proteins that exhibit high sequence similarity.

The protein localises to the spore membrane. The protein resides in the vacuole membrane. Its function is as follows. Acts as a suppressor component of the dual wtf meiotic drive system, and can suppress but not confer meiotic drive by compatible poisons. Wtf meiotic drive systems promote unequal transmission of alleles from the parental zygote to progeny spores by encoding a poison and an antidote from the same locus; the poison is trans-acting and forms toxic aggregates in all spores within an ascus, wherease the antidote is spore-specific and targets aggregates for degradation by the vacuole. Meiotic drive by wtf systems therefore lead to poisoning of all progeny that do not inherit the dual poison/antidote allele, or express a compatible antidote. In Schizosaccharomyces pombe (strain 972 / ATCC 24843) (Fission yeast), this protein is Meiotic drive suppressor wtf16.